A 531-amino-acid polypeptide reads, in one-letter code: Basal body-orientation factor 1 (531 aa).

A compositionally biased stretch (basic residues) spans 1 to 19 (MPKLKVKAGKGKKGKRKKA). The segment at 1-32 (MPKLKVKAGKGKKGKRKKAGKNEHRLDKESEV) is disordered. Basic and acidic residues predominate over residues 20 to 32 (GKNEHRLDKESEV). Coiled coils occupy residues 26-213 (LDKE…AEKA) and 274-365 (VQEK…VESF). The interval 465–505 (QSRKSPGLKPSPPADVSSIKEKEINTSNLEEKPEESSSTFI) is disordered. The span at 482 to 499 (SIKEKEINTSNLEEKPEE) shows a compositional bias: basic and acidic residues.

This sequence belongs to the BBOF1 family. As to expression, multiciliated cells.

The protein localises to the cytoplasm. The protein resides in the cytoskeleton. It localises to the cilium basal body. Basal body protein required in multiciliate cells to align and maintain cilia orientation in response to flow. May act by mediating a maturation step that stabilizes and aligns cilia orientation. Not required to respond to planar cell polarity (PCP) or flow-based orientation cues. The sequence is that of Basal body-orientation factor 1 (ccdc176) from Xenopus laevis (African clawed frog).